Consider the following 95-residue polypeptide: Small ribosomal subunit protein uS17 (95 aa).

Belongs to the universal ribosomal protein uS17 family. Part of the 30S ribosomal subunit.

Functionally, one of the primary rRNA binding proteins, it binds specifically to the 5'-end of 16S ribosomal RNA. The chain is Small ribosomal subunit protein uS17 from Mesomycoplasma hyopneumoniae (strain 7448) (Mycoplasma hyopneumoniae).